The chain runs to 83 residues: U20-theraphotoxin-Cg1a 1 (83 aa).

The N-terminal stretch at Met-1–Ala-21 is a signal peptide. Positions Ala-22 to Arg-47 are excised as a propeptide. 3 disulfide bridges follow: Cys-49–Cys-63, Cys-56–Cys-68, and Cys-62–Cys-76.

The protein belongs to the neurotoxin 10 (Hwtx-1) family. 40 (Jztx-35) subfamily. In terms of tissue distribution, expressed by the venom gland.

It localises to the secreted. Probable ion channel inhibitor. The chain is U20-theraphotoxin-Cg1a 1 from Chilobrachys guangxiensis (Chinese earth tiger tarantula).